The chain runs to 274 residues: Nickel/cobalt efflux system RcnA (274 aa).

The Periplasmic segment spans residues Met-1–Asn-12. A helical membrane pass occupies residues Ala-13–His-33. The Cytoplasmic portion of the chain corresponds to Ser-34–Gly-56. The chain crosses the membrane as a helical span at residues Leu-57 to Ile-77. Residues Ser-78–Ala-86 are Periplasmic-facing. A helical transmembrane segment spans residues Glu-87–Trp-107. The Cytoplasmic segment spans residues Arg-108 to Gln-174. Over residues His-127–Asp-137 the composition is skewed to basic and acidic residues. Positions His-127 to His-153 are disordered. The helical transmembrane segment at Ile-175 to Leu-195 threads the bilayer. Residues Ile-196 to Leu-209 are Periplasmic-facing. Residues Val-210–Ile-230 traverse the membrane as a helical segment. Residues Ser-231–Tyr-251 lie on the Cytoplasmic side of the membrane. The chain crosses the membrane as a helical span at residues Phe-252–Ile-272. Topologically, residues Met-273–Arg-274 are periplasmic.

Belongs to the NiCoT transporter (TC 2.A.52) family. RcnA subfamily.

The protein resides in the cell inner membrane. In terms of biological role, efflux system for nickel and cobalt. This chain is Nickel/cobalt efflux system RcnA (rcnA), found in Escherichia coli O6:K15:H31 (strain 536 / UPEC).